We begin with the raw amino-acid sequence, 597 residues long: Aspartate--tRNA(Asp/Asn) ligase (597 aa).

Glu-172 is a binding site for L-aspartate. The aspartate stretch occupies residues 196-199 (QLFK). Arg-218 contributes to the L-aspartate binding site. ATP-binding positions include 218–220 (RDE) and Gln-227. His-454 contacts L-aspartate. Residue Glu-488 participates in ATP binding. Residue Arg-495 participates in L-aspartate binding. Residue 540–543 (GLDR) coordinates ATP.

This sequence belongs to the class-II aminoacyl-tRNA synthetase family. Type 1 subfamily. Homodimer.

It localises to the cytoplasm. The enzyme catalyses tRNA(Asx) + L-aspartate + ATP = L-aspartyl-tRNA(Asx) + AMP + diphosphate. In terms of biological role, aspartyl-tRNA synthetase with relaxed tRNA specificity since it is able to aspartylate not only its cognate tRNA(Asp) but also tRNA(Asn). Reaction proceeds in two steps: L-aspartate is first activated by ATP to form Asp-AMP and then transferred to the acceptor end of tRNA(Asp/Asn). The chain is Aspartate--tRNA(Asp/Asn) ligase from Chromobacterium violaceum (strain ATCC 12472 / DSM 30191 / JCM 1249 / CCUG 213 / NBRC 12614 / NCIMB 9131 / NCTC 9757 / MK).